Consider the following 183-residue polypeptide: MGNSISKVLGKLFGSKEMKILMLGLDKAGKTTILYKLKLNKIKTSTPTVGFNVETVTYKNVKFNMWDVGGQQRLRPLWRHYFPATTALIFVIDSSARNRMEEAKEELYSIIGEKEMENVVLLVWANKQDLKDAMKPQEVSDFLELEKNLKNQPWCVIGSNALSGQGLVEGLSWISNNTNVPKK.

Gly2 carries N-myristoyl glycine lipidation. GTP-binding positions include 24–31 (GLDKAGKT), 67–71 (DVGGQ), and 126–129 (NKQD).

The protein belongs to the small GTPase superfamily. Arf family. Interacts with RUD3.

The protein resides in the golgi apparatus. GTP-binding protein involved in protein trafficking; may modulate vesicle budding and uncoating within the Golgi apparatus. The chain is ADP-ribosylation factor 3 (ARF3) from Saccharomyces cerevisiae (strain ATCC 204508 / S288c) (Baker's yeast).